A 242-amino-acid polypeptide reads, in one-letter code: ATP-dependent dethiobiotin synthetase BioD (242 aa).

12–17 serves as a coordination point for ATP; sequence EVGKTV. Residue Thr-16 coordinates Mg(2+). Lys-37 is a catalytic residue. Position 41 (Ser-41) interacts with substrate. Residues Asp-51 and 112 to 115 contribute to the ATP site; that span reads EGAG. Residues Asp-51 and Glu-112 each contribute to the Mg(2+) site.

This sequence belongs to the dethiobiotin synthetase family. In terms of assembly, homodimer. Requires Mg(2+) as cofactor.

The protein resides in the cytoplasm. The enzyme catalyses (7R,8S)-7,8-diammoniononanoate + CO2 + ATP = (4R,5S)-dethiobiotin + ADP + phosphate + 3 H(+). Its pathway is cofactor biosynthesis; biotin biosynthesis; biotin from 7,8-diaminononanoate: step 1/2. Catalyzes a mechanistically unusual reaction, the ATP-dependent insertion of CO2 between the N7 and N8 nitrogen atoms of 7,8-diaminopelargonic acid (DAPA, also called 7,8-diammoniononanoate) to form a ureido ring. The sequence is that of ATP-dependent dethiobiotin synthetase BioD from Bacillus thuringiensis subsp. konkukian (strain 97-27).